A 97-amino-acid chain; its full sequence is Apolipoprotein C-II (97 aa).

The signal sequence occupies residues 1–22; it reads MGSRFFLALFLVLLVLGNEVQG. Residues 63-71 are lipid binding; it reads SVDEKLRDM. The segment at 75–97 is lipoprotein lipase cofactor; it reads SSAAMSTYAGIFTDQLLTLLKGE.

It belongs to the apolipoprotein C2 family. Post-translationally, proapolipoprotein C-II is synthesized as a sialic acid containing glycoprotein which is subsequently desialylated prior to its proteolytic processing. In terms of processing, proapolipoprotein C-II, the major form found in plasma undergoes proteolytic cleavage of its N-terminal hexapeptide to generate the mature form apolipoprotein C-II, which occurs as the minor form in plasma.

The protein localises to the secreted. Component of chylomicrons, very low-density lipoproteins (VLDL), low-density lipoproteins (LDL), and high-density lipoproteins (HDL) in plasma. Plays an important role in lipoprotein metabolism as an activator of lipoprotein lipase. This is Apolipoprotein C-II (Apoc2) from Grammomys surdaster (African woodland thicket rat).